The sequence spans 185 residues: ATP synthase subunit b 2 (185 aa).

Positions Met-1–Phe-25 are disordered. The chain crosses the membrane as a helical span at residues Ala-34 to Leu-56.

The protein belongs to the ATPase B chain family. In terms of assembly, F-type ATPases have 2 components, F(1) - the catalytic core - and F(0) - the membrane proton channel. F(1) has five subunits: alpha(3), beta(3), gamma(1), delta(1), epsilon(1). F(0) has three main subunits: a(1), b(2) and c(10-14). The alpha and beta chains form an alternating ring which encloses part of the gamma chain. F(1) is attached to F(0) by a central stalk formed by the gamma and epsilon chains, while a peripheral stalk is formed by the delta and b chains.

The protein resides in the cell inner membrane. Its function is as follows. F(1)F(0) ATP synthase produces ATP from ADP in the presence of a proton or sodium gradient. F-type ATPases consist of two structural domains, F(1) containing the extramembraneous catalytic core and F(0) containing the membrane proton channel, linked together by a central stalk and a peripheral stalk. During catalysis, ATP synthesis in the catalytic domain of F(1) is coupled via a rotary mechanism of the central stalk subunits to proton translocation. Functionally, component of the F(0) channel, it forms part of the peripheral stalk, linking F(1) to F(0). The b'-subunit is a diverged and duplicated form of b found in plants and photosynthetic bacteria. This is ATP synthase subunit b 2 (atpF2) from Nitrobacter winogradskyi (strain ATCC 25391 / DSM 10237 / CIP 104748 / NCIMB 11846 / Nb-255).